A 143-amino-acid chain; its full sequence is MAKKIVGYIKLQVPAGKANPSPPIGPALGQRGLNIMEFCKAFNAKTQGMEPGLPIPVVITAFADKSFTFIMKTPPATVLIKKAIKLDKGSSKPHTDKVGTITRAQLEEIAKTKEPDLTAADMDAAVRTIAGTARSMGIVVEGV.

Belongs to the universal ribosomal protein uL11 family. In terms of assembly, part of the ribosomal stalk of the 50S ribosomal subunit. Interacts with L10 and the large rRNA to form the base of the stalk. L10 forms an elongated spine to which L12 dimers bind in a sequential fashion forming a multimeric L10(L12)X complex. One or more lysine residues are methylated.

Forms part of the ribosomal stalk which helps the ribosome interact with GTP-bound translation factors. This Thiobacillus denitrificans (strain ATCC 25259 / T1) protein is Large ribosomal subunit protein uL11.